Consider the following 132-residue polypeptide: Small ribosomal subunit protein uS8 (132 aa).

Belongs to the universal ribosomal protein uS8 family. In terms of assembly, part of the 30S ribosomal subunit. Contacts proteins S5 and S12.

One of the primary rRNA binding proteins, it binds directly to 16S rRNA central domain where it helps coordinate assembly of the platform of the 30S subunit. This is Small ribosomal subunit protein uS8 from Lacticaseibacillus casei (strain BL23) (Lactobacillus casei).